The chain runs to 503 residues: Lysine--tRNA ligase (503 aa).

Mg(2+) contacts are provided by Glu-412 and Glu-419.

This sequence belongs to the class-II aminoacyl-tRNA synthetase family. Homodimer. Mg(2+) serves as cofactor.

The protein localises to the cytoplasm. The catalysed reaction is tRNA(Lys) + L-lysine + ATP = L-lysyl-tRNA(Lys) + AMP + diphosphate. The polypeptide is Lysine--tRNA ligase (Idiomarina loihiensis (strain ATCC BAA-735 / DSM 15497 / L2-TR)).